The following is a 387-amino-acid chain: 3-ketoacyl-CoA thiolase (387 aa).

The active-site Acyl-thioester intermediate is the cysteine 91. Residues histidine 343 and cysteine 373 each act as proton acceptor in the active site.

Belongs to the thiolase-like superfamily. Thiolase family. In terms of assembly, heterotetramer of two alpha chains (FadB) and two beta chains (FadA).

The protein resides in the cytoplasm. The catalysed reaction is an acyl-CoA + acetyl-CoA = a 3-oxoacyl-CoA + CoA. Its pathway is lipid metabolism; fatty acid beta-oxidation. Catalyzes the final step of fatty acid oxidation in which acetyl-CoA is released and the CoA ester of a fatty acid two carbons shorter is formed. The sequence is that of 3-ketoacyl-CoA thiolase from Shigella flexneri serotype 5b (strain 8401).